The chain runs to 156 residues: Transcriptional repressor NrdR (156 aa).

Residues 3–34 (CPFCQHDDTQVLDTRISEEGDSIRRRRRCVSC) fold into a zinc finger. Residues 49 to 139 (PVIVKKNGSR…VYKSFEDVAE (91 aa)) form the ATP-cone domain.

It belongs to the NrdR family. The cofactor is Zn(2+).

Its function is as follows. Negatively regulates transcription of bacterial ribonucleotide reductase nrd genes and operons by binding to NrdR-boxes. The chain is Transcriptional repressor NrdR from Herminiimonas arsenicoxydans.